The following is a 264-amino-acid chain: Phosphonoacetaldehyde hydrolase (264 aa).

Asp-9 serves as the catalytic Nucleophile. Residues Asp-9 and Ala-11 each coordinate Mg(2+). The Schiff-base intermediate with substrate role is filled by Lys-50. Asp-183 contributes to the Mg(2+) binding site.

The protein belongs to the HAD-like hydrolase superfamily. PhnX family. Homodimer. Mg(2+) serves as cofactor.

It carries out the reaction phosphonoacetaldehyde + H2O = acetaldehyde + phosphate + H(+). Involved in phosphonate degradation. This is Phosphonoacetaldehyde hydrolase from Bacillus thuringiensis (strain Al Hakam).